Consider the following 1407-residue polypeptide: Trichohyalin (1407 aa).

The tract at residues 1 to 91 (MSPLLKSIID…AQAAYYALGQ (91 aa)) is S-100-like. EF-hand domains follow at residues 23-48 (CDGA…LQRP) and 49-84 (HDPE…LAQA). Ca(2+)-binding residues include D32, D62, D64, D66, and E73. 7 disordered regions span residues 148–172 (EEEE…DKEQ), 218–237 (LREE…RALQ), 362–471 (REQA…EEEQ), 486–587 (EQLQ…ERER), 1014–1033 (REEE…EEER), 1062–1082 (KEEK…EEQQ), and 1313–1407 (EQFA…QYRP). Basic and acidic residues-rich tracts occupy residues 362-381 (REQA…RQLE), 396-424 (RRQE…EQAR), 447-471 (SLRE…EEEQ), and 554-587 (QREK…ERER). The segment covering 1313–1376 (EQFAREEKSR…FREDQSRRQV (64 aa)) has biased composition (basic and acidic residues).

It belongs to the S100-fused protein family. In terms of assembly, homodimer. In terms of processing, substrate of transglutaminase. Some 200 arginines are probably converted to citrullines by peptidylarginine deimidase. As to expression, found in the hard keratinizing tissues such as the inner root sheath (IRS) of hair follicles and medulla, and in the filiform papillae of dorsal tongue epithelium.

In terms of biological role, intermediate filament-associated protein that associates in regular arrays with keratin intermediate filaments (KIF) of the inner root sheath cells of the hair follicle and the granular layer of the epidermis. It later becomes cross-linked to KIF by isodipeptide bonds. It may serve as scaffold protein, together with involucrin, in the organization of the cell envelope or even anchor the cell envelope to the KIF network. It may be involved in its own calcium-dependent postsynthetic processing during terminal differentiation. The sequence is that of Trichohyalin (TCHH) from Oryctolagus cuniculus (Rabbit).